We begin with the raw amino-acid sequence, 816 residues long: uncharacterized protein (816 aa).

503-534 contributes to the NADP(+) binding site; sequence DTWTVITGGTDGIGKAYIEELCKTRGLKKFYL. Residue S641 participates in substrate binding. Y661 acts as the Proton acceptor in catalysis. Transmembrane regions (helical) follow at residues 743–763 and 777–797; these read FGFS…SIVL and VFII…FLLN.

This sequence belongs to the short-chain dehydrogenases/reductases (SDR) family.

Its subcellular location is the membrane. This is an uncharacterized protein from Caenorhabditis elegans.